Reading from the N-terminus, the 81-residue chain is MQVYVYKSRRKPDTYIYLARKDDFEVIPAPLKQVFGTPEFTLEFELTPERTLAQEDPESVLASLRERGFHLQMPPQNERPL.

Residues 1–81 (MQVYVYKSRR…QMPPQNERPL (81 aa)) form the YcgL domain.

The sequence is that of YcgL domain-containing protein Tgr7_3126 from Thioalkalivibrio sulfidiphilus (strain HL-EbGR7).